The following is a 238-amino-acid chain: Uridylate kinase (238 aa).

12–15 (KLSG) is an ATP binding site. Position 54 (glycine 54) interacts with UMP. ATP is bound by residues glycine 55 and arginine 59. Residues aspartate 74 and 135-142 (TGNPFFTT) each bind UMP. 3 residues coordinate ATP: threonine 162, tyrosine 168, and aspartate 171.

Belongs to the UMP kinase family. As to quaternary structure, homohexamer.

The protein resides in the cytoplasm. It catalyses the reaction UMP + ATP = UDP + ADP. Its pathway is pyrimidine metabolism; CTP biosynthesis via de novo pathway; UDP from UMP (UMPK route): step 1/1. Its activity is regulated as follows. Inhibited by UTP. Its function is as follows. Catalyzes the reversible phosphorylation of UMP to UDP. The chain is Uridylate kinase from Bordetella parapertussis (strain 12822 / ATCC BAA-587 / NCTC 13253).